The following is a 154-amino-acid chain: Protein X (154 aa).

The interval 68-117 (PCALRFTSARRMETTVNTHMILPKVLHKRTLGLPAMSTIDLEAYFKDCLF) is mitochondrial targeting sequence.

The protein belongs to the orthohepadnavirus protein X family. In terms of assembly, may form homodimer. May interact with host CEBPA, CFLAR, CREB1, DDB1, E4F1, HBXIP, HSPD1/HSP60, NFKBIA, POLR2E and SMAD4. Interacts with host SMC5-SMC6 complex and induces its degradation. Interacts with host TRPC4AP; leading to prevent ubiquitination of TRPC4AP. Interacts with host PLSCR1; this interaction promotes ubiquitination and degradation of HBx and impairs HBx-mediated cell proliferation. In terms of processing, a fraction may be phosphorylated in insect cells and HepG2 cells, a human hepatoblastoma cell line. Phosphorylated in vitro by host protein kinase C or mitogen-activated protein kinase. N-acetylated in insect cells.

It localises to the host cytoplasm. The protein resides in the host nucleus. Its subcellular location is the host mitochondrion. In terms of biological role, multifunctional protein that plays a role in silencing host antiviral defenses and promoting viral transcription. Does not seem to be essential for HBV infection. May be directly involved in development of cirrhosis and liver cancer (hepatocellular carcinoma). Most of cytosolic activities involve modulation of cytosolic calcium. The effect on apoptosis is controversial depending on the cell types in which the studies have been conducted. May induce apoptosis by localizing in mitochondria and causing loss of mitochondrial membrane potential. May also modulate apoptosis by binding host CFLAR, a key regulator of the death-inducing signaling complex (DISC). Promotes viral transcription by using the host E3 ubiquitin ligase DDB1 to target the SMC5-SMC6 complex to proteasomal degradation. This host complex would otherwise bind to viral episomal DNA, and prevents its transcription. Moderately stimulates transcription of many different viral and cellular transcription elements. Promoters and enhancers stimulated by HBx contain DNA binding sites for NF-kappa-B, AP-1, AP-2, c-EBP, ATF/CREB, or the calcium-activated factor NF-AT. This is Protein X from Hepatitis B virus genotype C subtype ayw (isolate Australia/AustRC/1992) (HBV-C).